A 315-amino-acid chain; its full sequence is Methionyl-tRNA formyltransferase (315 aa).

Residue 112–115 (SLLP) participates in (6S)-5,6,7,8-tetrahydrofolate binding.

The protein belongs to the Fmt family.

The enzyme catalyses L-methionyl-tRNA(fMet) + (6R)-10-formyltetrahydrofolate = N-formyl-L-methionyl-tRNA(fMet) + (6S)-5,6,7,8-tetrahydrofolate + H(+). Its function is as follows. Attaches a formyl group to the free amino group of methionyl-tRNA(fMet). The formyl group appears to play a dual role in the initiator identity of N-formylmethionyl-tRNA by promoting its recognition by IF2 and preventing the misappropriation of this tRNA by the elongation apparatus. The sequence is that of Methionyl-tRNA formyltransferase from Rhizobium rhizogenes (strain K84 / ATCC BAA-868) (Agrobacterium radiobacter).